Here is a 62-residue protein sequence, read N- to C-terminus: Cobrotoxin II (62 aa).

The span at 1–16 (LECHNQQSSQTPTTTG) shows a compositional bias: polar residues. The tract at residues 1 to 23 (LECHNQQSSQTPTTTGCSGGENN) is disordered. Cystine bridges form between Cys3–Cys24, Cys17–Cys41, Cys43–Cys54, and Cys55–Cys60.

It belongs to the three-finger toxin family. Short-chain subfamily. Type I alpha-neurotoxin sub-subfamily. In terms of tissue distribution, expressed by the venom gland.

It is found in the secreted. Binds to muscle nicotinic acetylcholine receptor (nAChR) and inhibit acetylcholine from binding to the receptor, thereby impairing neuromuscular transmission. This Naja kaouthia (Monocled cobra) protein is Cobrotoxin II.